We begin with the raw amino-acid sequence, 343 residues long: Glycerol-3-phosphate dehydrogenase [NAD(P)+] (343 aa).

Positions 22, 23, 43, and 117 each coordinate NADPH. Residues K117, G146, and T148 each coordinate sn-glycerol 3-phosphate. A150 is a binding site for NADPH. Sn-glycerol 3-phosphate-binding residues include K202, D255, S265, R266, and N267. Residue K202 is the Proton acceptor of the active site. An NADPH-binding site is contributed by R266. The NADPH site is built by V290 and E292.

Belongs to the NAD-dependent glycerol-3-phosphate dehydrogenase family.

It localises to the cytoplasm. It carries out the reaction sn-glycerol 3-phosphate + NAD(+) = dihydroxyacetone phosphate + NADH + H(+). The enzyme catalyses sn-glycerol 3-phosphate + NADP(+) = dihydroxyacetone phosphate + NADPH + H(+). It participates in membrane lipid metabolism; glycerophospholipid metabolism. Functionally, catalyzes the reduction of the glycolytic intermediate dihydroxyacetone phosphate (DHAP) to sn-glycerol 3-phosphate (G3P), the key precursor for phospholipid synthesis. The sequence is that of Glycerol-3-phosphate dehydrogenase [NAD(P)+] from Aliivibrio fischeri (strain ATCC 700601 / ES114) (Vibrio fischeri).